The primary structure comprises 431 residues: MTRPLLSPEWVARLKQFKKLIVGFSGGLDSTVLLHVLASTPPLSNQLLAVHINHGISGNSLNWQRHCEQLCLDLGIAFIAKAIEFDRSANVEEAARNARYDFFSSLLEDNDCLVLGHHLDDQAETVLLQLFRGAGVDGLAAMQECSNLGAGQLARPFLTCPRVELEHYARIHELKWIEDESNQDTKYSRNYLRHRVMPLLLEKWPGVAGNISRAATHCQQAKANLEVLAIKDCPDLLNATDHLLIEPIKGLEFERITNVLKFWLKKNRIQLPSSKTFHRIIHEIIFAKLDAMPTVSWNQIQVRRFQQHLYLLKADQINLPKAIKWQQFPASLTYPDADIKLSAVKAQKGLMIPKDAQIEIRFRKGGEEIYWHGQTKHLKKLFQEWQIPPWVRDRVPLVYINDQLACVVGYAVSDLFFTTNPLEAWSIVNNS.

25–30 (SGGLDS) lines the ATP pocket.

Belongs to the tRNA(Ile)-lysidine synthase family.

It is found in the cytoplasm. The catalysed reaction is cytidine(34) in tRNA(Ile2) + L-lysine + ATP = lysidine(34) in tRNA(Ile2) + AMP + diphosphate + H(+). Ligates lysine onto the cytidine present at position 34 of the AUA codon-specific tRNA(Ile) that contains the anticodon CAU, in an ATP-dependent manner. Cytidine is converted to lysidine, thus changing the amino acid specificity of the tRNA from methionine to isoleucine. The polypeptide is tRNA(Ile)-lysidine synthase (Legionella pneumophila (strain Paris)).